A 323-amino-acid chain; its full sequence is Aldo-keto reductase family 1 member C1 (323 aa).

Residues 20–24 (GFGTY) and Asp-50 contribute to the NADP(+) site. Tyr-24 lines the substrate pocket. The active-site Proton donor is Tyr-55. Residue His-117 coordinates substrate. NADP(+) is bound by residues 166–167 (SN), Gln-190, and 216–222 (YSALGSH). Substrate-binding residues include His-222 and Trp-227. 270–280 (KSYNEQRIRQN) is a binding site for NADP(+).

Belongs to the aldo/keto reductase family. As to quaternary structure, monomer. Expressed in all tissues tested including liver, prostate, testis, adrenal gland, brain, uterus, mammary gland and keratinocytes. Highest levels found in liver, mammary gland and brain.

It localises to the cytoplasm. It is found in the cytosol. It carries out the reaction a 3alpha-hydroxysteroid + NADP(+) = a 3-oxosteroid + NADPH + H(+). The enzyme catalyses a 3alpha-hydroxysteroid + NAD(+) = a 3-oxosteroid + NADH + H(+). It catalyses the reaction (17R,20S)-17,20-dihydroxypregn-4-en-3-one + NADP(+) = 17alpha-hydroxyprogesterone + NADPH + H(+). The catalysed reaction is (17R,20S)-17,20-dihydroxypregn-4-en-3-one + NAD(+) = 17alpha-hydroxyprogesterone + NADH + H(+). It carries out the reaction (20S)-hydroxypregn-4-en-3-one + NADP(+) = progesterone + NADPH + H(+). The enzyme catalyses (20S)-hydroxypregn-4-en-3-one + NAD(+) = progesterone + NADH + H(+). It catalyses the reaction (1R,2R)-1,2-dihydrobenzene-1,2-diol + NADP(+) = catechol + NADPH + H(+). The catalysed reaction is (S)-indan-1-ol + NAD(+) = indan-1-one + NADH + H(+). It carries out the reaction (S)-indan-1-ol + NADP(+) = indan-1-one + NADPH + H(+). The enzyme catalyses 5alpha-androstane-3alpha,17beta-diol + NADP(+) = 17beta-hydroxy-5alpha-androstan-3-one + NADPH + H(+). It catalyses the reaction 5alpha-androstane-3beta,17beta-diol + NADP(+) = 17beta-hydroxy-5alpha-androstan-3-one + NADPH + H(+). The catalysed reaction is 5alpha-androstane-3alpha,17beta-diol + NAD(+) = 17beta-hydroxy-5alpha-androstan-3-one + NADH + H(+). It carries out the reaction 17beta-hydroxy-5alpha-androstan-3-one + NADP(+) = 5alpha-androstan-3,17-dione + NADPH + H(+). The enzyme catalyses androsterone + NADP(+) = 5alpha-androstan-3,17-dione + NADPH + H(+). It catalyses the reaction androsterone + NADPH + H(+) = 5alpha-androstane-3alpha,17beta-diol + NADP(+). The catalysed reaction is 5alpha-androstane-3alpha,17beta-diol + NAD(+) = androsterone + NADH + H(+). It carries out the reaction 17beta-estradiol + NADP(+) = estrone + NADPH + H(+). The enzyme catalyses 17beta-estradiol + NAD(+) = estrone + NADH + H(+). It catalyses the reaction testosterone + NADP(+) = androst-4-ene-3,17-dione + NADPH + H(+). The catalysed reaction is 20alpha-hydroxy-5beta-pregnan-3-one + NADP(+) = 5beta-pregnan-3,20-dione + NADPH + H(+). It carries out the reaction 3beta-hydroxy-5beta-pregnane-20-one + NADP(+) = 5beta-pregnan-3,20-dione + NADPH + H(+). The enzyme catalyses 3beta-hydroxy-5beta-pregnane-20-one + NADPH + H(+) = 3beta,20alpha-dihydroxy-5beta-pregnane + NADP(+). It catalyses the reaction (3beta,5alpha,17beta)-3-hydroxyandrostan-17-yl sulfate + NADP(+) = 5alpha-dihydrotestosterone sulfate + NADPH + H(+). Its pathway is steroid metabolism. Its activity is regulated as follows. Inhibited by hexestrol with an IC(50) of 9.5 uM, 1,10-phenanthroline with an IC(50) of 55 uM, 1,7-phenanthroline with an IC(50) of 72 uM, flufenamic acid with an IC(50) of 6.0 uM, indomethacin with an IC(50) of 140 uM, ibuprofen with an IC(50) of 950 uM, lithocholic acid with an IC(50) of 25 uM, ursodeoxycholic acid with an IC(50) of 340 uM and chenodeoxycholic acid with an IC(50) of 570 uM. The oxidation reaction is inhibited by low micromolar concentrations of NADPH. Cytosolic aldo-keto reductase that catalyzes the NADH and NADPH-dependent reduction of ketosteroids to hydroxysteroids. Most probably acts as a reductase in vivo since the oxidase activity measured in vitro is inhibited by physiological concentrations of NADPH. Displays a broad positional specificity acting on positions 3, 17 and 20 of steroids and regulates the metabolism of hormones like estrogens and androgens. May also reduce conjugated steroids such as 5alpha-dihydrotestosterone sulfate. Displays affinity for bile acids. This is Aldo-keto reductase family 1 member C1 (AKR1C1) from Homo sapiens (Human).